Here is a 555-residue protein sequence, read N- to C-terminus: Glutamine--tRNA ligase (555 aa).

Positions 34-44 (PEPNGYLHIGH) match the 'HIGH' region motif. ATP-binding positions include 35 to 37 (EPN) and 41 to 47 (HIGHAKS). L-glutamine-binding residues include Asp-67 and Tyr-212. Residues Thr-231, 261–262 (RL), and 269–271 (MSK) each bind ATP. A 'KMSKS' region motif is present at residues 268-272 (VMSKR). The tract at residues 317–324 (TKQDNTIE) is interaction with tRNA.

This sequence belongs to the class-I aminoacyl-tRNA synthetase family. In terms of assembly, monomer.

The protein resides in the cytoplasm. It carries out the reaction tRNA(Gln) + L-glutamine + ATP = L-glutaminyl-tRNA(Gln) + AMP + diphosphate. This chain is Glutamine--tRNA ligase, found in Salmonella choleraesuis (strain SC-B67).